The primary structure comprises 637 residues: Poly(A) polymerase beta (637 aa).

Positions methionine 1–glycine 10 are enriched in low complexity. The disordered stretch occupies residues methionine 1–valine 23. Residues phenylalanine 101–serine 103, threonine 110, aspartate 114–aspartate 116, aspartate 168, lysine 229, tyrosine 238, and glycine 247–valine 248 contribute to the ATP site. 3 residues coordinate Mg(2+): aspartate 114, aspartate 116, and aspartate 168. Residues serine 535–arginine 555 are disordered.

This sequence belongs to the poly(A) polymerase family. In terms of assembly, interacts with GSG1. Requires Mg(2+) as cofactor. The cofactor is Mn(2+). In terms of tissue distribution, testis specific.

The protein localises to the nucleus. The catalysed reaction is RNA(n) + ATP = RNA(n)-3'-adenine ribonucleotide + diphosphate. This is Poly(A) polymerase beta from Homo sapiens (Human).